We begin with the raw amino-acid sequence, 852 residues long: Protein SBE22 (852 aa).

The tract at residues 1 to 158 is disordered; the sequence is MTSIQERGTS…ADKSKINTFP (158 aa). Over residues 15–26 the composition is skewed to basic and acidic residues; the sequence is SLKEGEASDRSS. Polar residues predominate over residues 43–61; it reads PPSQTTLGRSRAGSNTMNK. Residue Ser72 is modified to Phosphoserine. Residues 74–96 are compositionally biased toward polar residues; the sequence is NLLSNMNCSDNGNGGNMLNSFVN. Low complexity predominate over residues 124 to 139; it reads TTEVFSSTSASSSLGD. Ser201 carries the post-translational modification Phosphoserine. The segment at 206–248 is disordered; sequence AAEKTMNKSRHSYQEQFSSKKSQSSLLNSKQRSRAKSQTCSST. Low complexity predominate over residues 224-235; that stretch reads SKKSQSSLLNSK. Phosphoserine occurs at positions 459, 517, and 520.

This sequence belongs to the SBE2 family.

Its subcellular location is the cytoplasm. It is found in the golgi apparatus. Its function is as follows. With SBE2, is involved in cell wall integrity and polarity processes like bud growth, through the transport of CHS3 and UTR2 to sites of growth. The polypeptide is Protein SBE22 (SBE22) (Saccharomyces cerevisiae (strain YJM789) (Baker's yeast)).